Reading from the N-terminus, the 217-residue chain is Thymidylate kinase (217 aa).

Residue glycine 12–serine 19 participates in ATP binding.

The protein belongs to the thymidylate kinase family.

The enzyme catalyses dTMP + ATP = dTDP + ADP. Functionally, phosphorylation of dTMP to form dTDP in both de novo and salvage pathways of dTTP synthesis. This Cereibacter sphaeroides (strain ATCC 17023 / DSM 158 / JCM 6121 / CCUG 31486 / LMG 2827 / NBRC 12203 / NCIMB 8253 / ATH 2.4.1.) (Rhodobacter sphaeroides) protein is Thymidylate kinase.